We begin with the raw amino-acid sequence, 732 residues long: Putative pectinesterase/pectinesterase inhibitor 28 (732 aa).

A helical membrane pass occupies residues 17–37; that stretch reads VIISISSVLLISMVVAVTIGV. N-linked (GlcNAc...) asparagine glycans are attached at residues Asn40, Asn93, Asn278, and Asn297. Residues 51–204 are pectinesterase inhibitor 28; that stretch reads TTSVKAIKDV…VQLTHNGLAM (154 aa). A pectinesterase 28 region spans residues 252 to 548; that stretch reads DIVVAQDGSG…FTPAQYIQGD (297 aa). Substrate-binding residues include Thr327 and Gln357. The Proton donor; for pectinesterase activity role is filled by Asp380. Cys394 and Cys414 are joined by a disulfide. Asp401 acts as the Nucleophile; for pectinesterase activity in catalysis. An N-linked (GlcNAc...) asparagine glycan is attached at Asn413. Substrate-binding residues include Arg469 and Trp471. Asn566, Asn570, and Asn581 each carry an N-linked (GlcNAc...) asparagine glycan. 2 stretches are compositionally biased toward low complexity: residues 570-620 and 633-732; these read NSTV…PSTS and PSMV…SSIG. The segment at 570–732 is disordered; that stretch reads NSTVTGSSLS…PSASPQSSIG (163 aa).

In the N-terminal section; belongs to the PMEI family. This sequence in the C-terminal section; belongs to the pectinesterase family. As to expression, expressed in flower buds.

It localises to the membrane. It carries out the reaction [(1-&gt;4)-alpha-D-galacturonosyl methyl ester](n) + n H2O = [(1-&gt;4)-alpha-D-galacturonosyl](n) + n methanol + n H(+). It functions in the pathway glycan metabolism; pectin degradation; 2-dehydro-3-deoxy-D-gluconate from pectin: step 1/5. Its function is as follows. Acts in the modification of cell walls via demethylesterification of cell wall pectin. The sequence is that of Putative pectinesterase/pectinesterase inhibitor 28 (PME28) from Arabidopsis thaliana (Mouse-ear cress).